Here is a 338-residue protein sequence, read N- to C-terminus: Large ribosomal subunit protein uL10 (338 aa).

The disordered stretch occupies residues 295 to 338; the sequence is EVPTIQPTTPPEKKEEEEKKEEEEEEAETVSEEELAEGLGALFG. The span at 312–330 shows a compositional bias: acidic residues; it reads EKKEEEEEEAETVSEEELA.

Belongs to the universal ribosomal protein uL10 family. Part of the 50S ribosomal subunit. Forms part of the ribosomal stalk which helps the ribosome interact with GTP-bound translation factors. Forms a heptameric L10(L12)2(L12)2(L12)2 complex, where L10 forms an elongated spine to which the L12 dimers bind in a sequential fashion.

In terms of biological role, forms part of the ribosomal stalk, playing a central role in the interaction of the ribosome with GTP-bound translation factors. The protein is Large ribosomal subunit protein uL10 of Staphylothermus marinus (strain ATCC 43588 / DSM 3639 / JCM 9404 / F1).